The sequence spans 398 residues: Chalcone synthase (398 aa).

The active site involves C169.

Belongs to the thiolase-like superfamily. Chalcone/stilbene synthases family.

The catalysed reaction is (E)-4-coumaroyl-CoA + 3 malonyl-CoA + 3 H(+) = 2',4,4',6'-tetrahydroxychalcone + 3 CO2 + 4 CoA. The protein operates within secondary metabolite biosynthesis; flavonoid biosynthesis. Functionally, the primary product of this enzyme is 4,2',4',6'-tetrahydroxychalcone (also termed naringenin-chalcone or chalcone) which can under specific conditions spontaneously isomerize into naringenin. The chain is Chalcone synthase (CHS) from Petroselinum crispum (Parsley).